The chain runs to 213 residues: MTISISDLRKDYRQQSLSETEVDPNPLQQFQTWFKQAIEAEILEPNAMTLATLSREGKPAARIVLLKEVDDRGFTFFTNYKSRKGEELAHDPWAALVFWWAELERQVRIEGSVSQVSAADSDRYFSSRPWGSRLGAWASEQSKAITGREVLEQNLRALEQEYRDREVPRPPHWGGYRLSPTLIEFWQGRPNRLHDRLCYRLQGDQWQLERLSP.

Substrate-binding positions include 9–12 (RKDY) and Lys67. FMN is bound by residues 62 to 67 (RIVLLK), 77 to 78 (FT), Arg83, Lys84, and Gln106. Residues Tyr124, Arg128, and Ser132 each contribute to the substrate site. Residues 141-142 (QS) and Trp186 each bind FMN. A substrate-binding site is contributed by 192–194 (RLH). Arg196 is an FMN binding site.

This sequence belongs to the pyridoxamine 5'-phosphate oxidase family. As to quaternary structure, homodimer. Requires FMN as cofactor.

The enzyme catalyses pyridoxamine 5'-phosphate + O2 + H2O = pyridoxal 5'-phosphate + H2O2 + NH4(+). The catalysed reaction is pyridoxine 5'-phosphate + O2 = pyridoxal 5'-phosphate + H2O2. The protein operates within cofactor metabolism; pyridoxal 5'-phosphate salvage; pyridoxal 5'-phosphate from pyridoxamine 5'-phosphate: step 1/1. It functions in the pathway cofactor metabolism; pyridoxal 5'-phosphate salvage; pyridoxal 5'-phosphate from pyridoxine 5'-phosphate: step 1/1. In terms of biological role, catalyzes the oxidation of either pyridoxine 5'-phosphate (PNP) or pyridoxamine 5'-phosphate (PMP) into pyridoxal 5'-phosphate (PLP). The polypeptide is Pyridoxine/pyridoxamine 5'-phosphate oxidase (Cyanothece sp. (strain PCC 7425 / ATCC 29141)).